A 268-amino-acid polypeptide reads, in one-letter code: Lipase 1 (268 aa).

An N-terminal signal peptide occupies residues M1–A29. S44 functions as the Nucleophile in the catalytic mechanism. Cystine bridges form between C61–C86, C127–C135, and C185–C231. H250 is a catalytic residue.

Belongs to the 'GDSL' lipolytic enzyme family. In terms of assembly, monomer.

The protein resides in the secreted. It catalyses the reaction a triacylglycerol + H2O = a diacylglycerol + a fatty acid + H(+). Strongly inhibited by Ag(+). The cations Ca(2+), Mg(2+), Co(2+) and Cu(2+) do not significantly reduce the lipolytic activity of SCO1725. Is also inhibited by DTT in vitro, but not by EDTA or by the reagent masking SH-groups, p-hydroxymercuribenzoate (pHMB). Is resistant to PMSF inhibition, except in the presence of Ca(2+). Is also strongly inhibited by 3,4-dichloroisocoumarin (DCI), another inhibitor of serine hydrolases. Addition of tetrahydrofuran and 1,4-dioxane significantly increases (2- and 4- fold, respectively) hydrolytic activity of lipase towards p-nitrophenyl caprylate. Functionally, catalyzes the hydrolysis of fatty acid esters with a preference for mid-length acyl chain (C10-C16). Is able to hydrolyze the triacylglycerol triolein and mixed triacylglycerols from a wide range of natural oils; better activity is obtained with corn-, wheat germ- and olive oil that have higher content of linoleic and/or oleic acid (C18:2; C18:1, cis). Tween detergents are also substrates for this enzyme. Displays arylesterase activity towards p-nitrophenyl alkanoate esters and alpha- and beta-naphthyl esters. In Streptomyces coelicolor (strain ATCC BAA-471 / A3(2) / M145), this protein is Lipase 1.